The chain runs to 366 residues: UDP-N-acetylglucosamine--N-acetylmuramyl-(pentapeptide) pyrophosphoryl-undecaprenol N-acetylglucosamine transferase (366 aa).

UDP-N-acetyl-alpha-D-glucosamine contacts are provided by residues 10 to 12 (TGG), Asn124, Arg165, Ser195, Ile250, and Gln295.

The protein belongs to the glycosyltransferase 28 family. MurG subfamily.

It is found in the cell inner membrane. The enzyme catalyses di-trans,octa-cis-undecaprenyl diphospho-N-acetyl-alpha-D-muramoyl-L-alanyl-D-glutamyl-meso-2,6-diaminopimeloyl-D-alanyl-D-alanine + UDP-N-acetyl-alpha-D-glucosamine = di-trans,octa-cis-undecaprenyl diphospho-[N-acetyl-alpha-D-glucosaminyl-(1-&gt;4)]-N-acetyl-alpha-D-muramoyl-L-alanyl-D-glutamyl-meso-2,6-diaminopimeloyl-D-alanyl-D-alanine + UDP + H(+). The protein operates within cell wall biogenesis; peptidoglycan biosynthesis. Its function is as follows. Cell wall formation. Catalyzes the transfer of a GlcNAc subunit on undecaprenyl-pyrophosphoryl-MurNAc-pentapeptide (lipid intermediate I) to form undecaprenyl-pyrophosphoryl-MurNAc-(pentapeptide)GlcNAc (lipid intermediate II). This chain is UDP-N-acetylglucosamine--N-acetylmuramyl-(pentapeptide) pyrophosphoryl-undecaprenol N-acetylglucosamine transferase, found in Thermodesulfovibrio yellowstonii (strain ATCC 51303 / DSM 11347 / YP87).